Consider the following 148-residue polypeptide: Cysteine-rich venom protein VAR6 (148 aa).

The signal sequence occupies residues 1–22 (MILLKLYLTLAAILCQSRGTTS). One can recognise an SCP domain in the interval 41–140 (NKHNDLRRTV…AGVMVGHYTQ (100 aa)).

It belongs to the CRISP family. Post-translationally, contains 8 disulfide bonds. Expressed by the venom gland.

The protein resides in the secreted. Its function is as follows. Blocks ryanodine receptors, and potassium channels. The protein is Cysteine-rich venom protein VAR6 of Varanus acanthurus (Ridge-tailed monitor).